We begin with the raw amino-acid sequence, 248 residues long: Protein PARTING DANCERS homolog (248 aa).

A compositionally biased stretch (polar residues) spans 1–10 (MERSTHSTGW). The disordered stretch occupies residues 1–25 (MERSTHSTGWTCLPPPPPEPAAPGR).

Belongs to the ERCC1/RAD10/SWI10 family. As to quaternary structure, interacts with SHOC1 (via C-terminus). Interacts with HEI10. As to expression, highly expressed in anthers and pistil during meiosis. Expressed in pollen mother cells (PMCs) during meiosis. Expressed at low levels in roots, shoots, leaves, flowers, and glumes.

The protein localises to the chromosome. Its subcellular location is the nucleus. The protein resides in the cytoplasm. It is found in the cell membrane. Essential for normal crossover (CO) formation during meiosis. Essential component for the formation of class I meiotic COs. Interacts with SHOC1, another meiotic component, to regulate CO formation, possibly by stabilizing the recombination intermediates during meiosis. PTD and SHOC1 may form transient heterotrimeric or heterotetrameric complexes with HEI10 and/or ZIP4 to promote class I COs formation. Does not seem to be involved in early meiotic recombination steps involving double-strand break (DSB) formation, processing, and single-strand invasion. Does not seem to be involved in homologous pairing or synaptonemal complex (SC) assembly. This Oryza sativa subsp. japonica (Rice) protein is Protein PARTING DANCERS homolog.